The chain runs to 343 residues: Protein RecA (343 aa).

An ATP-binding site is contributed by 66–73 (GPESSGKT).

This sequence belongs to the RecA family.

The protein resides in the cytoplasm. In terms of biological role, can catalyze the hydrolysis of ATP in the presence of single-stranded DNA, the ATP-dependent uptake of single-stranded DNA by duplex DNA, and the ATP-dependent hybridization of homologous single-stranded DNAs. It interacts with LexA causing its activation and leading to its autocatalytic cleavage. The chain is Protein RecA from Rickettsia conorii (strain ATCC VR-613 / Malish 7).